We begin with the raw amino-acid sequence, 269 residues long: Imidazoleglycerol-phosphate dehydratase 2, chloroplastic (269 aa).

A chloroplast-targeting transit peptide spans 1–51; sequence MTTAPFLFPSLSRLHSARASSFPKPPVGSGAGVAFPARPYGSSLRLRSSVM. Substrate contacts are provided by residues Glu-83, 109–117, 135–139, Arg-161, and Arg-183; these read HMLDQLASH and HHSNE. The Mn(2+) site is built by His-109, His-135, His-136, and Glu-139. Mn(2+) contacts are provided by His-207, His-231, His-232, and Glu-235. Substrate contacts are provided by residues 231–239 and 261–263; these read HHIIEATFK and SSK.

Belongs to the imidazoleglycerol-phosphate dehydratase family. Mn(2+) serves as cofactor.

It is found in the plastid. Its subcellular location is the chloroplast. The catalysed reaction is D-erythro-1-(imidazol-4-yl)glycerol 3-phosphate = 3-(imidazol-4-yl)-2-oxopropyl phosphate + H2O. Its pathway is amino-acid biosynthesis; L-histidine biosynthesis; L-histidine from 5-phospho-alpha-D-ribose 1-diphosphate: step 6/9. This chain is Imidazoleglycerol-phosphate dehydratase 2, chloroplastic, found in Triticum aestivum (Wheat).